The chain runs to 220 residues: Protein-L-isoaspartate O-methyltransferase (220 aa).

Ser68 is an active-site residue.

The protein belongs to the methyltransferase superfamily. L-isoaspartyl/D-aspartyl protein methyltransferase family.

The protein localises to the cytoplasm. It catalyses the reaction [protein]-L-isoaspartate + S-adenosyl-L-methionine = [protein]-L-isoaspartate alpha-methyl ester + S-adenosyl-L-homocysteine. Functionally, catalyzes the methyl esterification of L-isoaspartyl residues in peptides and proteins that result from spontaneous decomposition of normal L-aspartyl and L-asparaginyl residues. It plays a role in the repair and/or degradation of damaged proteins. In Dictyoglomus thermophilum (strain ATCC 35947 / DSM 3960 / H-6-12), this protein is Protein-L-isoaspartate O-methyltransferase.